A 133-amino-acid chain; its full sequence is Sigma factor-binding protein Crl (133 aa).

Residues 99-122 (TLDDFYVKLTKFVKEDCQLDLQAS) form an essential for activity region.

Belongs to the Crl family.

It localises to the cytoplasm. Binds to the sigma-S subunit of RNA polymerase, activating expression of sigma-S-regulated genes. Stimulates RNA polymerase holoenzyme formation and may bind to several other sigma factors, such as sigma-70 and sigma-32. This Photobacterium profundum (strain SS9) protein is Sigma factor-binding protein Crl.